A 186-amino-acid chain; its full sequence is Adenine phosphoribosyltransferase (186 aa).

The protein belongs to the purine/pyrimidine phosphoribosyltransferase family. As to quaternary structure, homodimer.

Its subcellular location is the cytoplasm. The enzyme catalyses AMP + diphosphate = 5-phospho-alpha-D-ribose 1-diphosphate + adenine. Its pathway is purine metabolism; AMP biosynthesis via salvage pathway; AMP from adenine: step 1/1. In terms of biological role, catalyzes a salvage reaction resulting in the formation of AMP, that is energically less costly than de novo synthesis. The sequence is that of Adenine phosphoribosyltransferase from Xanthomonas oryzae pv. oryzae (strain MAFF 311018).